The chain runs to 254 residues: RSRALILGVLALTTMLSLCGGEDDIEADHVAFYGISVYQSPGDIGQYTFEFDGDELFYVDLDKKETVWMLPEFGQLTSFDPQGGLQEIATGKYNLEILIKDSNFTPAANEAPQATVFPKSPVLLGQPNTLICFVDNIFPPVINITWLRNSKSVTDGVYETSFLVNRDHSFHKLSYLTFIPSDDDIYDCKVEHWGLEEPVLKHWEPEIPAPMSELTETVVCALGLSVGLVGIVVGTIFIIQGLRSGGTSRHPGPL.

A signal peptide spans 1–24 (RSRALILGVLALTTMLSLCGGEDD). An alpha-1 region spans residues 25–109 (IEADHVAFYG…KDSNFTPAAN (85 aa)). Over 25-216 (IEADHVAFYG…IPAPMSELTE (192 aa)) the chain is Extracellular. N103 and N143 each carry an N-linked (GlcNAc...) asparagine glycan. An alpha-2 region spans residues 110-203 (EAPQATVFPK…GLEEPVLKHW (94 aa)). An Ig-like C1-type domain is found at 112 to 204 (PQATVFPKSP…LEEPVLKHWE (93 aa)). An intrachain disulfide couples C132 to C188. Positions 204–216 (EPEIPAPMSELTE) are connecting peptide. A helical membrane pass occupies residues 217–242 (TVVCALGLSVGLVGIVVGTIFIIQGL). Residues 243-254 (RSGGTSRHPGPL) are Cytoplasmic-facing.

It belongs to the MHC class II family.

Its subcellular location is the membrane. In Mus musculus (Mouse), this protein is H-2 class II histocompatibility antigen, I-E alpha chain.